The following is a 242-amino-acid chain: Pyridoxine 5'-phosphate synthase (242 aa).

Asn-6 is a binding site for 3-amino-2-oxopropyl phosphate. A 1-deoxy-D-xylulose 5-phosphate-binding site is contributed by 8–9; that stretch reads DH. 3-amino-2-oxopropyl phosphate is bound at residue Arg-17. The Proton acceptor role is filled by His-42. 1-deoxy-D-xylulose 5-phosphate contacts are provided by Arg-44 and His-49. The active-site Proton acceptor is the Glu-69. A 1-deoxy-D-xylulose 5-phosphate-binding site is contributed by Thr-99. The active-site Proton donor is the His-193. 3-amino-2-oxopropyl phosphate-binding positions include Gly-194 and 217 to 218; that span reads GH.

The protein belongs to the PNP synthase family. In terms of assembly, homooctamer; tetramer of dimers.

It is found in the cytoplasm. It catalyses the reaction 3-amino-2-oxopropyl phosphate + 1-deoxy-D-xylulose 5-phosphate = pyridoxine 5'-phosphate + phosphate + 2 H2O + H(+). Its pathway is cofactor biosynthesis; pyridoxine 5'-phosphate biosynthesis; pyridoxine 5'-phosphate from D-erythrose 4-phosphate: step 5/5. Catalyzes the complicated ring closure reaction between the two acyclic compounds 1-deoxy-D-xylulose-5-phosphate (DXP) and 3-amino-2-oxopropyl phosphate (1-amino-acetone-3-phosphate or AAP) to form pyridoxine 5'-phosphate (PNP) and inorganic phosphate. The sequence is that of Pyridoxine 5'-phosphate synthase from Aquifex aeolicus (strain VF5).